The following is a 273-amino-acid chain: Exosporium protein C (273 aa).

The protein resides in the spore wall. The sequence is that of Exosporium protein C from Clostridium sporogenes (strain ATCC 15579).